The chain runs to 538 residues: MKMRRYKLFLMFCMAGLCLISFLHFFKTLSYVTFPRELASLSPNLISSFFWNNAPVTPQASPEPGDPDLLRTPLYSHSPLLQPLSPSKATEELHRVDFVLPEDTTEYFVRTKAGGVCFKPGTRMLEKPSPGRTEEKTKVAEGSSVRGPARRPMRHVLSARERLGGRGTRRKWVECVCLPGWHGPSCGVPTVVQYSNLPTKERLVPREVPRRVINAININHEFDLLDVRFHELGDVVDAFVVCESNFTAYGEPRPLKFREMLTNGTFEYIRHKVLYVFLDHFPPGGRQDGWIADDYLRTFLTQDGVSRLRNLRPDDVFIIDDADEIPARDGVLFLKLYDGWTEPFAFHMRKSLYGFFWKQPGTLEVVSGCTIDMLQAVYGLDGIRLRRRQYYTMPNFRQYENRTGHILVQWSLGSPLHFAGWHCSWCFTPEGIYFKLVSAQNGDFPRWGDYEDKRDLNYIRSLIRTGGWFDGTQQEYPPADPSEHMYAPKYLLKNYDQFRYLLENPYREPKSTVEGGRRNQGSDGRSSAVRGKLDTTEG.

Topologically, residues 1–7 (MKMRRYK) are cytoplasmic. The helical; Signal-anchor for type II membrane protein transmembrane segment at 8 to 23 (LFLMFCMAGLCLISFL) threads the bilayer. Residues 24 to 538 (HFFKTLSYVT…VRGKLDTTEG (515 aa)) are Lumenal-facing. The segment at 121–151 (GTRMLEKPSPGRTEEKTKVAEGSSVRGPARR) is disordered. Residues Asn245, Asn263, and Asn401 are each glycosylated (N-linked (GlcNAc...) asparagine). Residues 509–538 (PKSTVEGGRRNQGSDGRSSAVRGKLDTTEG) are disordered.

Belongs to the glycosyltransferase 17 family. As to quaternary structure, interacts with MGAT4D.

Its subcellular location is the golgi apparatus membrane. It catalyses the reaction N(4)-{beta-D-GlcNAc-(1-&gt;2)-alpha-D-Man-(1-&gt;3)-[beta-D-GlcNAc-(1-&gt;2)-alpha-D-Man-(1-&gt;6)]-beta-D-Man-(1-&gt;4)-beta-D-GlcNAc-(1-&gt;4)-beta-D-GlcNAc}-L-asparaginyl-[protein] + UDP-N-acetyl-alpha-D-glucosamine = N(4)-{beta-D-GlcNAc-(1-&gt;2)-alpha-D-Man-(1-&gt;3)-[beta-D-GlcNAc-(1-&gt;4)]-[beta-D-GlcNAc-(1-&gt;2)-alpha-D-Man-(1-&gt;6)]-beta-D-Man-(1-&gt;4)-beta-D-GlcNAc-(1-&gt;4)-beta-D-GlcNAc}-L-asparaginyl-[protein] + UDP + H(+). Its pathway is protein modification; protein glycosylation. In terms of biological role, it is involved in the regulation of the biosynthesis and biological function of glycoprotein oligosaccharides. Catalyzes the addition of N-acetylglucosamine in beta 1-4 linkage to the beta-linked mannose of the trimannosyl core of N-linked sugar chains, called bisecting N-acetylglucosamine (GlcNAc). It is one of the most important enzymes involved in the regulation of the biosynthesis of glycoprotein oligosaccharides. The addition of this bisecting GlcNAc residue alters not only the composition, but also the conformation of the N-glycan. The introduction of the bisecting GlcNAc residue results in the suppression of further processing and elongation of N-glycans, precluding the formation of beta-1,6 GlcNAc branching, catalyzed by MGAT5 since it is unable to use the bisected oligosaccharide as a substrate. Addition of bisecting N-acetylglucosamine to CDH1/E-cadherin modulates CDH1 cell membrane location. Inhibits NeuAc-alpha-2,3-Gal-beta-1,4-GlcNAc- formation which modulates sialylation levels and plays a role in cell migration regulation. In brain, addition of bisecting N-acetylglucosamine to BACE1 blocks its lysosomal targeting in response to oxidative stress and further degradation which increases its location to early endosome and the APP cleavage. This chain is Beta-1,4-mannosyl-glycoprotein 4-beta-N-acetylglucosaminyltransferase (Mgat3), found in Rattus norvegicus (Rat).